A 147-amino-acid chain; its full sequence is uncharacterized protein (147 aa).

Residues 69–89 (IFFFLSLYLSSIKIPMLILNI) traverse the membrane as a helical segment.

The protein localises to the membrane. This is an uncharacterized protein from Saccharomyces cerevisiae (strain ATCC 204508 / S288c) (Baker's yeast).